A 341-amino-acid chain; its full sequence is uncharacterized protein (341 aa).

The helical transmembrane segment at valine 315 to methionine 337 threads the bilayer.

The protein localises to the cell membrane. This is an uncharacterized protein from Bacillus subtilis (strain 168).